The following is a 100-amino-acid chain: uncharacterized protein (100 aa).

The tract at residues 78–100 is disordered; sequence KPYRTESGTSSSNRMMLPPRQHV.

This is an uncharacterized protein from Caenorhabditis elegans.